A 101-amino-acid chain; its full sequence is DNA-binding protein TubR (101 aa).

As to quaternary structure, homodimer. Dimers bind to DNA, forming a protein-bound filament which may form a helix around the TubZ filament.

Its function is as follows. A DNA-binding protein that is part of the type III plasmid partition system used to ensure correct segregation of the pBM400 plasmid. Binds the plasmid origin of replication, probably cooperatively, forming a ring or short helix with external DNA. Its effect on RNA expression has not been shown. This Priestia megaterium (strain ATCC 12872 / QMB1551) (Bacillus megaterium) protein is DNA-binding protein TubR.